Reading from the N-terminus, the 247-residue chain is Ribonuclease 3 (247 aa).

An RNase III domain is found at V21 to G149. E62 contributes to the Mg(2+) binding site. The active site involves D66. Residues D135 and E138 each contribute to the Mg(2+) site. The active site involves E138. The DRBM domain maps to D176 to E244.

It belongs to the ribonuclease III family. In terms of assembly, homodimer. Requires Mg(2+) as cofactor.

It is found in the cytoplasm. The enzyme catalyses Endonucleolytic cleavage to 5'-phosphomonoester.. In terms of biological role, digests double-stranded RNA. Involved in the processing of primary rRNA transcript to yield the immediate precursors to the large and small rRNAs (23S and 16S). Processes some mRNAs, and tRNAs when they are encoded in the rRNA operon. Processes pre-crRNA and tracrRNA of type II CRISPR loci if present in the organism. The polypeptide is Ribonuclease 3 (Corynebacterium glutamicum (strain ATCC 13032 / DSM 20300 / JCM 1318 / BCRC 11384 / CCUG 27702 / LMG 3730 / NBRC 12168 / NCIMB 10025 / NRRL B-2784 / 534)).